The following is a 392-amino-acid chain: Selenide, water dikinase 1 (392 aa).

The active site involves Cys31. ATP-binding positions include Lys32, 67 to 69, Asp87, Asp110, and 161 to 164; these read GMD and GGQT. Asp69 lines the Mg(2+) pocket. Asp110 lines the Mg(2+) pocket. Asp265 is a Mg(2+) binding site.

This sequence belongs to the selenophosphate synthase 1 family. Class II subfamily. Homodimer. Mg(2+) is required as a cofactor.

Its subcellular location is the cell membrane. The protein localises to the nucleus membrane. It carries out the reaction hydrogenselenide + ATP + H2O = selenophosphate + AMP + phosphate + 2 H(+). Synthesizes selenophosphate from selenide and ATP. This chain is Selenide, water dikinase 1 (sephs1), found in Xenopus laevis (African clawed frog).